Consider the following 378-residue polypeptide: Tafazzin (378 aa).

At Met-1–Tyr-137 the chain is on the mitochondrial intermembrane side. The interval Ala-46–Val-112 is disordered. The segment covering Pro-51–Ile-67 has biased composition (basic and acidic residues). Residues Val-138 to Leu-158 lie within the membrane without spanning it. The Mitochondrial intermembrane segment spans residues Asn-159–Asn-378. Positions His-188–Asp-193 match the HXXXXD motif motif.

It belongs to the taffazin family. Associates with multiple protein complexes. Association with large protein complexes occurs only in the presence of cardiolipin.

The protein resides in the mitochondrion outer membrane. Its subcellular location is the mitochondrion inner membrane. The protein localises to the mitochondrion. It localises to the mitochondrion membrane. It is found in the golgi apparatus membrane. The protein resides in the endoplasmic reticulum membrane. It carries out the reaction 1'-[1,2-diacyl-sn-glycero-3-phospho],3'-[1-acyl-sn-glycero-3-phospho]-glycerol + a 1,2-diacyl-sn-glycero-3-phosphocholine = a cardiolipin + a 1-acyl-sn-glycero-3-phosphocholine. The enzyme catalyses 1'-[1,2-di-(9Z,12Z-octadecadienoyl)-sn-glycero-3-phospho]-3'-[1-(9Z,12Z-octadecadienoyl)-sn-glycero-3-phospho]-glycerol + 1-hexadecanoyl-2-(9Z,12Z-octadecadienoyl)-sn-glycero-3-phosphocholine = 1',3'-bis-[1,2-di-(9Z,12Z-octadecadienoyl)-sn-glycero-3-phospho]-glycerol + 1-hexadecanoyl-sn-glycero-3-phosphocholine. The catalysed reaction is 1'-[1,2-di-(9Z,12Z-octadecadienoyl)-sn-glycero-3-phospho]-3'-[2-(9Z,12Z-octadecadienoyl)-sn-glycero-3-phospho]-glycerol + 1-hexadecanoyl-2-(9Z,12Z-octadecadienoyl)-sn-glycero-3-phosphocholine = 1',3'-bis-[1,2-di-(9Z,12Z-octadecadienoyl)-sn-glycero-3-phospho]-glycerol + 1-hexadecanoyl-sn-glycero-3-phosphocholine. It catalyses the reaction 1,2-di-(9Z,12Z-octadecadienoyl)-sn-glycero-3-phosphocholine + 1'-[1,2-di-(9Z,12Z-octadecadienoyl)-sn-glycero-3-phospho]-3'-[1-(9Z,12Z-octadecadienoyl)-sn-glycero-3-phospho]-glycerol = 1-(9Z,12Z)-octadecadienoyl-sn-glycero-3-phosphocholine + 1',3'-bis-[1,2-di-(9Z,12Z-octadecadienoyl)-sn-glycero-3-phospho]-glycerol. It carries out the reaction 1-tetradecanoyl-sn-glycero-3-phosphocholine + 1',3'-bis-[1,2-di-(9Z,12Z-octadecadienoyl)-sn-glycero-3-phospho]-glycerol = 1-tetradecanoyl-2-(9Z,12Z-octadecadienoyl)-sn-glycero-3-phosphocholine + 1'-[1,2-di-(9Z,12Z-octadecadienoyl)-sn-glycero-3-phospho]-3'-[1-(9Z,12Z-octadecadienoyl)-sn-glycero-3-phospho]-glycerol. The enzyme catalyses 1',3'-bis[1,2-di-(9Z-octadecenoyl)-sn-glycero-3-phospho]-glycerol + 1-nonadecanoyl-sn-glycero-3-phosphocholine = 1-nonadecanoyl-2-(9Z-octadecenoyl)-sn-glycero-3-phosphocholine + 1'-[1,2-di-(9Z-octadecenoyl)-sn-glycero-3-phospho]-3'-[1-(9Z-octadecenoyl)-sn-glycero-3-phospho]-glycerol. The catalysed reaction is a 1,2-diacyl-sn-glycero-3-phospho-(1'-sn-glycerol) + a 1-acyl-sn-glycero-3-phosphocholine = 1-acyl-sn-glycero-3-phospho-(1'-sn-glycerol) + a 1,2-diacyl-sn-glycero-3-phosphocholine. It catalyses the reaction 1-hexadecanoyl-2-(9Z,12Z-octadecadienoyl)-sn-glycero-3-phospho-(1'-sn-glycerol) + 1-hexadecanoyl-sn-glycero-3-phosphocholine = 1-hexadecanoyl-sn-glycero-3-phospho-(1'-sn-glycerol) + 1-hexadecanoyl-2-(9Z,12Z-octadecadienoyl)-sn-glycero-3-phosphocholine. It carries out the reaction 1,2-di-(9Z-octadecenoyl)-sn-glycero-3-phospho-(1'-sn-glycerol) + 1-nonadecanoyl-sn-glycero-3-phosphocholine = 1-nonadecanoyl-2-(9Z-octadecenoyl)-sn-glycero-3-phosphocholine + 1-(9Z-octadecenoyl)-sn-glycero-3-phospho-(1'-sn-glycerol). The enzyme catalyses a 1,2-diacyl-sn-glycero-3-phosphate + a 1-acyl-sn-glycero-3-phosphocholine = a 1-acyl-sn-glycero-3-phosphate + a 1,2-diacyl-sn-glycero-3-phosphocholine. The catalysed reaction is 1-hexadecanoyl-2-(9Z,12Z-octadecadienoyl)-sn-glycero-3-phosphate + 1-hexadecanoyl-sn-glycero-3-phosphocholine = 1-hexadecanoyl-2-(9Z,12Z-octadecadienoyl)-sn-glycero-3-phosphocholine + 1-hexadecanoyl-sn-glycero-3-phosphate. It catalyses the reaction 1-hexadecanoyl-2-(9Z,12Z-octadecadienoyl)-sn-glycero-3-phosphocholine + 1-(9Z-octadecenoyl)-sn-glycero-3-phosphate = 1-(9Z)-octadecenoyl-2-(9Z,12Z)-octadecadienoyl-sn-glycero-3-phosphate + 1-hexadecanoyl-sn-glycero-3-phosphocholine. It carries out the reaction a 1-acyl-sn-glycero-3-phosphocholine + a 1,2-diacyl-sn-glycero-3-phosphoethanolamine = a 1-acyl-sn-glycero-3-phosphoethanolamine + a 1,2-diacyl-sn-glycero-3-phosphocholine. The enzyme catalyses 1-hexadecanoyl-2-(9Z,12Z-octadecadienoyl)-sn-glycero-3-phosphoethanolamine + 1-hexadecanoyl-sn-glycero-3-phosphocholine = 1-hexadecanoyl-2-(9Z,12Z-octadecadienoyl)-sn-glycero-3-phosphocholine + 1-hexadecanoyl-sn-glycero-3-phosphoethanolamine. The catalysed reaction is 1,2-di-(9Z,12Z-octadecadienoyl)-sn-glycero-3-phosphoethanolamine + 1-tetradecanoyl-sn-glycero-3-phosphocholine = 1-(9Z,12Z-octadecadienoyl)-sn-glycero-3-phosphoethanolamine + 1-tetradecanoyl-2-(9Z,12Z-octadecadienoyl)-sn-glycero-3-phosphocholine. It catalyses the reaction 1'-[1,2-diacyl-sn-glycero-3-phospho],3'-[1-acyl-sn-glycero-3-phospho]-glycerol + a 1,2-diacyl-sn-glycero-3-phosphoethanolamine = a cardiolipin + a 1-acyl-sn-glycero-3-phosphoethanolamine. It carries out the reaction 1-hexadecanoyl-2-(9Z,12Z-octadecadienoyl)-sn-glycero-3-phosphoethanolamine + 1'-[1,2-di-(9Z,12Z-octadecadienoyl)-sn-glycero-3-phospho]-3'-[1-(9Z,12Z-octadecadienoyl)-sn-glycero-3-phospho]-glycerol = 1',3'-bis-[1,2-di-(9Z,12Z-octadecadienoyl)-sn-glycero-3-phospho]-glycerol + 1-hexadecanoyl-sn-glycero-3-phosphoethanolamine. The enzyme catalyses 1'-[1-(9Z,12Z-octadecadienoyl)-2-(9Z-octadecenoyl)-sn-glycero-3-phospho]-3'-[1-(9Z,12Z-octadecadienoyl)-sn-glycero-3-phospho]-glycerol + 1',3'-bis-[1,2-di-(9Z,12Z-octadecadienoyl)-sn-glycero-3-phospho]-glycerol = 1'-[1,2-di-(9Z,12Z-octadecadienoyl)-sn-glycero-3-phospho]-3'-[1-(9Z,12Z-octadecadienoyl)-2-(9Z-octadecenoyl)-sn-glycero-3-phospho]-glycerol + 1'-[1,2-di-(9Z,12Z-octadecadienoyl)-sn-glycero-3-phospho]-3'-[1-(9Z,12Z-octadecadienoyl)-sn-glycero-3-phospho]-glycerol. The catalysed reaction is 1,2-di-(9Z-hexadecenoyl)-sn-glycero-3-phosphocholine + 1-hexadecanoyl-sn-glycero-3-phosphocholine = 1-hexadecanoyl-2-(9Z-hexadecenoyl)-sn-glycero-3-phosphocholine + 1-(9Z-hexadecenoyl)-sn-glycero-3-phosphocholine. It catalyses the reaction 1,2-dioctadecanoyl-sn-glycero-3-phosphocholine + 1-hexadecanoyl-sn-glycero-3-phosphocholine = 1-hexadecanoyl-2-octadecanoyl-sn-glycero-3-phosphocholine + 1-octadecanoyl-sn-glycero-3-phosphocholine. It carries out the reaction 1,2-di-(9Z-octadecenoyl)-sn-glycero-3-phosphocholine + 1-hexadecanoyl-sn-glycero-3-phosphocholine = 1-hexadecanoyl-2-(9Z-octadecenoyl)-sn-glycero-3-phosphocholine + 1-(9Z-octadecenoyl)-sn-glycero-3-phosphocholine. The enzyme catalyses 1,2-di-(9Z,12Z-octadecadienoyl)-sn-glycero-3-phosphocholine + 1-(9Z-octadecenoyl)-sn-glycero-3-phosphocholine = 1-(9Z)-octadecenoyl-2-(9Z,12Z)-octadecadienoyl-sn-glycero-3-phosphocholine + 1-(9Z,12Z)-octadecadienoyl-sn-glycero-3-phosphocholine. The catalysed reaction is 1,2-di-(9Z,12Z,15Z-octadecatrienoyl)-sn-glycero-3-phosphocholine + 1-tetradecanoyl-sn-glycero-3-phosphocholine = 1-tetradecanoyl-2-(9Z,12Z,15Z-octadecatrienoyl)-sn-glycero-3-phosphocholine + 1-(9Z,12Z,15Z-octadecatrienoyl)-sn-glycero-3-phosphocholine. It catalyses the reaction 1-nonadecanoyl-sn-glycero-3-phosphocholine + 1-octadecanoyl-2-(9Z-octadecenoyl)-sn-glycero-3-phosphocholine = 1-nonadecanoyl-2-(9Z-octadecenoyl)-sn-glycero-3-phosphocholine + 1-octadecanoyl-sn-glycero-3-phosphocholine. It carries out the reaction 1-(9Z)-octadecenoyl-2-octadecanoyl-sn-glycero-3-phosphocholine + 1-nonadecanoyl-sn-glycero-3-phosphocholine = 2-octadecanoyl-sn-glycero-3-phosphocholine + 1-nonadecanoyl-2-(9Z-octadecenoyl)-sn-glycero-3-phosphocholine. Its pathway is phospholipid metabolism. Acyltransferase required to remodel newly synthesized phospholipid cardiolipin (1',3'-bis-[1,2-diacyl-sn-glycero-3-phospho]-glycerol or CL), a key component of the mitochondrial inner membrane, with tissue specific acyl chains necessary for adequate mitochondrial function. Its role in cellular physiology is to improve mitochondrial performance. CL is critical for the coassembly of lipids and proteins in mitochondrial membranes. For instance, remodeling of the acyl groups of CL in the mitochondrial inner membrane affects the assembly and stability of respiratory chain complex IV and its supercomplex forms. Catalyzes the transacylation between phospholipids and lysophospholipids, with the highest rate being between phosphatidylcholine (1,2-diacyl-sn-glycero-3-phosphocholine or PC) and CL. Catalyzes both 1-acyl-sn-glycero-3-phosphocholine (lysophosphatidylcholine or LPC) reacylation and PC-CL transacylation, that means, it exchanges acyl groups between CL and PC by a combination of forward and reverse transacylations. Also catalyzes transacylations between other phospholipids such as phosphatidylethanolamine (1,2-diacyl-sn-glycero-3-phosphoethanolamine or PE) and CL, between PC and PE, and between PC and phosphatidate (1,2-diacyl-sn-glycero-3-phosphate or PA), although at lower rate. Not regiospecific, it transfers acyl groups into any of the sn-1 and sn-2 positions of the monolysocardiolipin (MLCL), which is an important prerequisite for uniformity and symmetry in CL acyl distribution. Cannot transacylate dilysocardiolipin (DLCL), thus, the role of MLCL is limited to that of an acyl acceptor. CoA-independent, it can reshuffle molecular species within a single phospholipid class. Redistributes fatty acids between MLCL, CL, and other lipids, which prolongs the half-life of CL. Its action is completely reversible, which allows for cyclic changes, such as fission and fusion or bending and flattening of the membrane. Hence, by contributing to the flexibility of the lipid composition, it plays an important role in the dynamics of mitochondria membranes. Essential for the final stage of spermatogenesis, spermatid individualization. Required for the initiation of mitophagy. This chain is Tafazzin, found in Drosophila melanogaster (Fruit fly).